The following is a 273-amino-acid chain: Dermonecrotic toxin (273 aa).

Mg(2+)-binding residues include glutamate 20 and aspartate 22. Histidine 35 (nucleophile) is an active-site residue. Cysteine 39 and cysteine 45 are oxidised to a cystine. Position 79 (aspartate 79) interacts with Mg(2+).

This sequence belongs to the arthropod phospholipase D family. Class I subfamily. It depends on Mg(2+) as a cofactor. In terms of tissue distribution, expressed by the venom gland.

The protein localises to the secreted. The catalysed reaction is an N-(acyl)-sphingosylphosphocholine = an N-(acyl)-sphingosyl-1,3-cyclic phosphate + choline. The enzyme catalyses an N-(acyl)-sphingosylphosphoethanolamine = an N-(acyl)-sphingosyl-1,3-cyclic phosphate + ethanolamine. It carries out the reaction a 1-acyl-sn-glycero-3-phosphocholine = a 1-acyl-sn-glycero-2,3-cyclic phosphate + choline. It catalyses the reaction a 1-acyl-sn-glycero-3-phosphoethanolamine = a 1-acyl-sn-glycero-2,3-cyclic phosphate + ethanolamine. In terms of biological role, dermonecrotic toxins cleave the phosphodiester linkage between the phosphate and headgroup of certain phospholipids (sphingolipid and lysolipid substrates), forming an alcohol (often choline) and a cyclic phosphate. This toxin acts on sphingomyelin (SM). It may also act on ceramide phosphoethanolamine (CPE), lysophosphatidylcholine (LPC) and lysophosphatidylethanolamine (LPE), but not on lysophosphatidylserine (LPS), and lysophosphatidylglycerol (LPG). It acts by transphosphatidylation, releasing exclusively cyclic phosphate products as second products. Induces dermonecrosis, hemolysis, increased vascular permeability, edema, inflammatory response, and platelet aggregation. The sequence is that of Dermonecrotic toxin from Loxosceles laeta (South American recluse spider).